Here is a 296-residue protein sequence, read N- to C-terminus: UDP-N-acetylenolpyruvoylglucosamine reductase (296 aa).

An FAD-binding PCMH-type domain is found at 26–191 (RIGGPANYFK…LSATFRLSKS (166 aa)). Residue Arg-170 is part of the active site. Cys-218 functions as the Proton donor in the catalytic mechanism. Glu-287 is a catalytic residue.

It belongs to the MurB family. FAD is required as a cofactor.

The protein localises to the cytoplasm. The enzyme catalyses UDP-N-acetyl-alpha-D-muramate + NADP(+) = UDP-N-acetyl-3-O-(1-carboxyvinyl)-alpha-D-glucosamine + NADPH + H(+). It functions in the pathway cell wall biogenesis; peptidoglycan biosynthesis. Its function is as follows. Cell wall formation. This Chlamydia felis (strain Fe/C-56) (Chlamydophila felis) protein is UDP-N-acetylenolpyruvoylglucosamine reductase.